Reading from the N-terminus, the 135-residue chain is uncharacterized protein (135 aa).

This is an uncharacterized protein from Bacillus subtilis (strain 168).